The sequence spans 89 residues: DNA/RNA-binding protein Alba 1 (89 aa).

This sequence belongs to the histone-like Alba family.

The protein localises to the cytoplasm. The protein resides in the chromosome. In terms of biological role, binds double-stranded DNA tightly but without sequence specificity. Involved in DNA compaction. The sequence is that of DNA/RNA-binding protein Alba 1 from Archaeoglobus fulgidus (strain ATCC 49558 / DSM 4304 / JCM 9628 / NBRC 100126 / VC-16).